Reading from the N-terminus, the 190-residue chain is Peptidyl-tRNA hydrolase (190 aa).

Position 14 (Tyr-14) interacts with tRNA. His-19 acts as the Proton acceptor in catalysis. TRNA is bound by residues Tyr-64, Asn-66, and Asn-112.

This sequence belongs to the PTH family. Monomer.

It is found in the cytoplasm. The catalysed reaction is an N-acyl-L-alpha-aminoacyl-tRNA + H2O = an N-acyl-L-amino acid + a tRNA + H(+). Functionally, hydrolyzes ribosome-free peptidyl-tRNAs (with 1 or more amino acids incorporated), which drop off the ribosome during protein synthesis, or as a result of ribosome stalling. In terms of biological role, catalyzes the release of premature peptidyl moieties from peptidyl-tRNA molecules trapped in stalled 50S ribosomal subunits, and thus maintains levels of free tRNAs and 50S ribosomes. This chain is Peptidyl-tRNA hydrolase, found in Chlorobium phaeovibrioides (strain DSM 265 / 1930) (Prosthecochloris vibrioformis (strain DSM 265)).